A 57-amino-acid chain; its full sequence is Small ribosomal subunit protein bS21 (57 aa).

A disordered region spans residues 35–57 (RERYEKPSLRRKRKQEAARKRNR).

Belongs to the bacterial ribosomal protein bS21 family.

This Thermosynechococcus vestitus (strain NIES-2133 / IAM M-273 / BP-1) protein is Small ribosomal subunit protein bS21.